A 297-amino-acid chain; its full sequence is Mycothiol acetyltransferase (297 aa).

N-acetyltransferase domains are found at residues 8-153 and 156-297; these read DALD…PPLP and VALR…QYAL. Residue E36 participates in 1D-myo-inositol 2-(L-cysteinylamino)-2-deoxy-alpha-D-glucopyranoside binding. Position 80–82 (80–82) interacts with acetyl-CoA; that stretch reads LAV. The 1D-myo-inositol 2-(L-cysteinylamino)-2-deoxy-alpha-D-glucopyranoside site is built by E183, K223, and E231. Acetyl-CoA-binding positions include 235-237 and 242-248; these read VGV and QGGGLGK. 1D-myo-inositol 2-(L-cysteinylamino)-2-deoxy-alpha-D-glucopyranoside is bound at residue Y269. Acetyl-CoA is bound at residue 274-279; the sequence is NSPAVR.

This sequence belongs to the acetyltransferase family. MshD subfamily. As to quaternary structure, monomer.

The catalysed reaction is 1D-myo-inositol 2-(L-cysteinylamino)-2-deoxy-alpha-D-glucopyranoside + acetyl-CoA = mycothiol + CoA + H(+). Functionally, catalyzes the transfer of acetyl from acetyl-CoA to desacetylmycothiol (Cys-GlcN-Ins) to form mycothiol. This Actinosynnema mirum (strain ATCC 29888 / DSM 43827 / JCM 3225 / NBRC 14064 / NCIMB 13271 / NRRL B-12336 / IMRU 3971 / 101) protein is Mycothiol acetyltransferase.